Here is a 335-residue protein sequence, read N- to C-terminus: 2-acylglycerol O-acyltransferase 1 (335 aa).

2 helical membrane-spanning segments follow: residues threonine 18–isoleucine 38 and valine 40–phenylalanine 60. N-linked (GlcNAc...) asparagine glycans are attached at residues asparagine 121 and asparagine 125. Residues leucine 132–phenylalanine 152 form a helical membrane-spanning segment. Asparagine 180 carries N-linked (GlcNAc...) asparagine glycosylation.

The protein belongs to the diacylglycerol acyltransferase family. In terms of tissue distribution, expressed in stomach and liver.

The protein localises to the endoplasmic reticulum membrane. It carries out the reaction a 2-acylglycerol + an acyl-CoA = a 1,2-diacylglycerol + CoA. It catalyses the reaction 2-(9Z-octadecenoyl)-glycerol + butanoyl-CoA = 1-butanoyl-2-(9Z-octadecenoyl)-glycerol + CoA. The enzyme catalyses 2-(9Z-octadecenoyl)-glycerol + octanoyl-CoA = 1-octanoyl-2-(9Z-octadecenoyl)-glycerol + CoA. The catalysed reaction is 2-(9Z-octadecenoyl)-glycerol + dodecanoyl-CoA = 1-dodecanoyl-2-(9Z-octadecenoyl)-glycerol + CoA. It carries out the reaction 2-(9Z-octadecenoyl)-glycerol + tetradecanoyl-CoA = 1-tetradecanoyl-2-(9Z-octadecenoyl)-glycerol + CoA. It catalyses the reaction 2-(9Z-octadecenoyl)-glycerol + hexadecanoyl-CoA = 1-hexadecanoyl-2-(9Z-octadecenoyl)-glycerol + CoA. The enzyme catalyses 2-(9Z-octadecenoyl)-glycerol + octadecanoyl-CoA = 1-octadecanoyl-2-(9Z-octadecenoyl)-glycerol + CoA. The catalysed reaction is eicosanoyl-CoA + 2-(9Z-octadecenoyl)-glycerol = 1-eicosanoyl-2-(9Z-octadecenoyl)-glycerol + CoA. It carries out the reaction 2-(9Z-octadecenoyl)-glycerol + (9Z)-octadecenoyl-CoA = 1,2-di-(9Z-octadecenoyl)-glycerol + CoA. It catalyses the reaction 2-(9Z-octadecenoyl)-glycerol + (9Z,12Z)-octadecadienoyl-CoA = 1-(9Z,12Z-octadecadienoyl)-2-(9Z-octadecenoyl)-glycerol + CoA. The enzyme catalyses 2-(9Z-octadecenoyl)-glycerol + (5Z,8Z,11Z,14Z)-eicosatetraenoyl-CoA = 1-(5Z,8Z,11Z,14Z-eicosatetraenoyl)-2-(9Z-octadecenoyl)-glycerol + CoA. The catalysed reaction is a 2-acylglycerol + an acyl-CoA = a 1,2-diacyl-sn-glycerol + CoA. It carries out the reaction a 2-acylglycerol + an acyl-CoA = a 2,3-diacyl-sn-glycerol + CoA. It catalyses the reaction a 1-acylglycerol + an acyl-CoA = a 1,2-diacylglycerol + CoA. The enzyme catalyses 1-dodecanoylglycerol + (9Z)-octadecenoyl-CoA = 1-dodecanoyl-2-(9Z-octadecenoyl)-glycerol + CoA. The catalysed reaction is 1-tetradecanoylglycerol + (9Z)-octadecenoyl-CoA = 1-tetradecanoyl-2-(9Z-octadecenoyl)-glycerol + CoA. It carries out the reaction 1-hexadecanoylglycerol + (9Z)-octadecenoyl-CoA = 1-hexadecanoyl-2-(9Z-octadecenoyl)-glycerol + CoA. It catalyses the reaction 1-(9Z-octadecenoyl)-glycerol + (9Z)-octadecenoyl-CoA = 1,2-di-(9Z-octadecenoyl)-glycerol + CoA. The enzyme catalyses 1-(9Z,12Z-octadecadienoyl)-glycerol + (9Z)-octadecenoyl-CoA = 1-(9Z,12Z-octadecadienoyl)-2-(9Z-octadecenoyl)-glycerol + CoA. The catalysed reaction is 1-(9Z,12Z,15Z-octadecatrienoyl)-glycerol + (9Z)-octadecenoyl-CoA = 1-(9Z,12Z,15Z-octadecatrienoyl)-2-(9Z-octadecenoyl)-glycerol + CoA. It carries out the reaction 1-(5Z,8Z,11Z,14Z-eicosatetraenoyl)-glycerol + (9Z)-octadecenoyl-CoA = 1-(5Z,8Z,11Z,14Z-eicosatetraenoyl)-2-(9Z-octadecenoyl)-glycerol + CoA. It catalyses the reaction a 1-acylglycerol + an acyl-CoA = a 1,3-diacylglycerol + CoA. The enzyme catalyses 1-dodecanoylglycerol + (9Z)-octadecenoyl-CoA = 1-dodecanoyl-3-(9Z-octadecenoyl)-glycerol + CoA. The catalysed reaction is 1-hexadecanoylglycerol + (9Z)-octadecenoyl-CoA = 1-(9Z-octadecenoyl)-3-hexadecanoylglycerol + CoA. It carries out the reaction 1-octadecanoylglycerol + (9Z)-octadecenoyl-CoA = 1-octadecanoyl-3-(9Z-octadecenoyl)-glycerol + CoA. It catalyses the reaction 1-(9Z-octadecenoyl)-sn-glycerol + (9Z)-octadecenoyl-CoA = 1,3-di-(9Z-octadecenoyl)-glycerol + CoA. The enzyme catalyses 1-(9Z,12Z-octadecadienoyl)-glycerol + (9Z)-octadecenoyl-CoA = 1-(9Z-octadecenoyl)-3-(9Z,12Z-octadecadienoyl)-glycerol + CoA. The catalysed reaction is 1-(9Z,12Z,15Z-octadecatrienoyl)-glycerol + (9Z)-octadecenoyl-CoA = 1-(9Z,12Z,15Z-octadecatrienoyl)-3-(9Z-octadecenoyl)-glycerol + CoA. It carries out the reaction a 1-acyl-sn-glycerol + an acyl-CoA = a 1,3-diacyl-sn-glycerol + CoA. It catalyses the reaction a 3-acyl-sn-glycerol + an acyl-CoA = a 1,3-diacyl-sn-glycerol + CoA. The enzyme catalyses 3-octadecanoyl-sn-glycerol + (9Z)-octadecenoyl-CoA = 1-(9Z-octadecenoyl)-3-octadecanoyl-sn-glycerol + CoA. It functions in the pathway glycerolipid metabolism; triacylglycerol biosynthesis. In terms of biological role, involved in glycerolipid synthesis and lipid metabolism. Catalyzes the formation of diacylglycerol, the precursor of triacylglycerol, by transferring the acyl chain of a fatty acyl-CoA to a monoacylglycerol, mainly at the sn-1 or sn-3 positions. It uses both sn-2-monoacylglycerol (2-acylglycerol) and sn-1-monoacylglycerol (1-acyl-sn-glycerol) equally well as substrates, and uses sn-3-monoacylglycerol (3-acyl-sn-glycerol) with lower efficiency. Probably not involved in absorption of dietary fat in the small intestine. In Homo sapiens (Human), this protein is 2-acylglycerol O-acyltransferase 1.